The following is a 112-amino-acid chain: Large ribosomal subunit protein bL20c (112 aa).

It belongs to the bacterial ribosomal protein bL20 family.

It localises to the plastid. The protein resides in the chloroplast. Functionally, binds directly to 23S ribosomal RNA and is necessary for the in vitro assembly process of the 50S ribosomal subunit. It is not involved in the protein synthesizing functions of that subunit. The sequence is that of Large ribosomal subunit protein bL20c (rpl20) from Chlamydomonas reinhardtii (Chlamydomonas smithii).